The primary structure comprises 436 residues: Ribosome biogenesis protein WDR12 homolog (436 aa).

The ubiquitin-like (UBL) domain stretch occupies residues 13-97 (VRVRFLTKLP…ERVLELEYVK (85 aa)). WD repeat units follow at residues 109–147 (PHDD…THIL), 149–193 (GHSD…SVPK), 203–242 (GHTS…EDGD), 273–311 (GHTQ…ETWN), 313–353 (VSGK…TLAP), 359–399 (SHKS…PLAS), and 402–436 (SHKD…IEIV). The tract at residues 240–262 (DGDTVSVKKRRTNSDSSGPEESL) is disordered.

The protein belongs to the WD repeat WDR12/YTM1 family.

Its subcellular location is the nucleus. The protein localises to the nucleolus. It is found in the nucleoplasm. Its function is as follows. Required for maturation of ribosomal RNAs and formation of the large ribosomal subunit. This chain is Ribosome biogenesis protein WDR12 homolog, found in Oryza sativa subsp. japonica (Rice).